A 166-amino-acid polypeptide reads, in one-letter code: MHENQQPQTEAFELSAAEREAIEHEMHHYEDPRAASIEALKIVQKQRGWVPDGAIHAIADVLGIPASDVEGVATFYSQIFRQPVGRHVIRYCDSVVCHINGYQGIQAALEKKLNIKPGQTTFDGRFTLLPTCCLGNCDKGPNMMIDEDTHAHLTPEAIPELLERYK.

Positions 92, 97, 133, and 137 each coordinate [2Fe-2S] cluster.

Belongs to the complex I 24 kDa subunit family. In terms of assembly, composed of 13 different subunits. Subunits NuoCD, E, F, and G constitute the peripheral sector of the complex. The cofactor is [2Fe-2S] cluster.

It catalyses the reaction a quinone + NADH + 5 H(+)(in) = a quinol + NAD(+) + 4 H(+)(out). Its function is as follows. NDH-1 shuttles electrons from NADH, via FMN and iron-sulfur (Fe-S) centers, to quinones in the respiratory chain. The immediate electron acceptor for the enzyme in this species is believed to be ubiquinone. Couples the redox reaction to proton translocation (for every two electrons transferred, four hydrogen ions are translocated across the cytoplasmic membrane), and thus conserves the redox energy in a proton gradient. The chain is NADH-quinone oxidoreductase subunit E (nuoE) from Shigella flexneri.